A 212-amino-acid polypeptide reads, in one-letter code: Thymidylate kinase (212 aa).

10–17 provides a ligand contact to ATP; that stretch reads GLEGAGKT.

The protein belongs to the thymidylate kinase family.

The enzyme catalyses dTMP + ATP = dTDP + ADP. Its function is as follows. Phosphorylation of dTMP to form dTDP in both de novo and salvage pathways of dTTP synthesis. This is Thymidylate kinase from Yersinia pseudotuberculosis serotype O:3 (strain YPIII).